A 146-amino-acid polypeptide reads, in one-letter code: Large-conductance mechanosensitive channel (146 aa).

The next 3 membrane-spanning stretches (helical) occupy residues 21 to 41 (VGII…ADLI), 44 to 64 (IIGL…LGDG), and 83 to 103 (GSFI…FLLV).

This sequence belongs to the MscL family. As to quaternary structure, homopentamer.

The protein resides in the cell inner membrane. In terms of biological role, channel that opens in response to stretch forces in the membrane lipid bilayer. May participate in the regulation of osmotic pressure changes within the cell. This Cereibacter sphaeroides (strain ATCC 17023 / DSM 158 / JCM 6121 / CCUG 31486 / LMG 2827 / NBRC 12203 / NCIMB 8253 / ATH 2.4.1.) (Rhodobacter sphaeroides) protein is Large-conductance mechanosensitive channel.